The following is a 212-amino-acid chain: Protein Rv0786c (212 aa).

This is Protein Rv0786c from Mycobacterium tuberculosis (strain ATCC 25618 / H37Rv).